The following is a 213-amino-acid chain: StAR-related lipid transfer protein 5 (213 aa).

In terms of domain architecture, START spans 1-213; the sequence is MDLATAAQVS…LEKAVKKFFG (213 aa).

Its function is as follows. May be involved in the intracellular transport of sterols or other lipids. May bind cholesterol or other sterols. The sequence is that of StAR-related lipid transfer protein 5 (STARD5) from Bos taurus (Bovine).